The chain runs to 467 residues: MRANSKAKPVSRAALAGEADPRLVALSVSIQDDGALYAEDIRGSQAHVSMLAAQGIVPKAAARRIVAALDQVRAEFAAGKIRFDPALEDVHTHVERRLGELVGKDAGYLHAGRSRNDQVALDERLFIVGACDRCDAALERLQRAFLGQARAHERTILPGYTHLQRAQPVSLAHHLLAYVEMFGRDRERFAEVRRRAAISPLGSGALAGTTLPLDREAVAARLGLAGVTHNSLDAVSDRDSAAELLFACALAAVHLSRIGEELVLWTTKEFGFATLSDAFATGSSLMPQKKNPDVGELARGRAGRALGDLVALLAILKGLPLSYNRDLQEDKRPLLGGPEALVLTADAVAGAVETATFHAARMEEALGSGEALATDAAEYLVDRGVPFREAHEAVGKAAAFSAREGRPMARLTAAEWATFHRRFEKDVLRCFDARRSLRRRELPGAPGPRAVRAELRRWEKALGKARG.

The protein belongs to the lyase 1 family. Argininosuccinate lyase subfamily.

Its subcellular location is the cytoplasm. It carries out the reaction 2-(N(omega)-L-arginino)succinate = fumarate + L-arginine. Its pathway is amino-acid biosynthesis; L-arginine biosynthesis; L-arginine from L-ornithine and carbamoyl phosphate: step 3/3. The polypeptide is Argininosuccinate lyase (Anaeromyxobacter sp. (strain K)).